A 392-amino-acid chain; its full sequence is 5-azacytidine-induced protein 2 (392 aa).

Residues 1–197 (MDALVEDDIC…IELQKAKQTD (197 aa)) are homodimerization. 3 coiled-coil regions span residues 40-76 (ALVTAYEDIKKRLKDSEKENSLLKKRIRFLEEKLIAR), 102-135 (DRDNLKSKLDKMNKDNSESLKVLNEQLQSKEVEL), and 166-196 (DLKIHGLEQELELMRKECSDLKIELQKAKQT). Positions 216–257 (SDNMQHAYWELKREMSNLHLVTQVQAELLRKLKTSTAIKKAC) are interaction with TBK1 and IKBKE. Phosphoserine is present on residues S318 and S353. A disordered region spans residues 345 to 365 (EDNSWVFPSPPKSSETAFGET).

In terms of assembly, homodimer. Interacts with IKBKE, TBK1 and TICAM1. Interacts with TAX1BP1. Interacts with CALCOCO2. In terms of processing, ubiquitinated via 'Lys-48'-linked polyubiquitination by TRIM38, leading to its degradation.

The protein localises to the cytoplasm. Its function is as follows. Adapter protein which binds TBK1 and IKBKE playing a role in antiviral innate immunity. Activates serine/threonine-protein kinase TBK1 and facilitates its oligomerization. Enhances the phosphorylation of NF-kappa-B p65 subunit RELA by TBK1. Promotes TBK1-induced as well as TNF-alpha or PMA-induced activation of NF-kappa-B. Participates in IFNB promoter activation via TICAM1. In Pongo abelii (Sumatran orangutan), this protein is 5-azacytidine-induced protein 2 (AZI2).